The following is a 497-amino-acid chain: Probable malate:quinone oxidoreductase (497 aa).

Belongs to the MQO family. The cofactor is FAD.

It catalyses the reaction (S)-malate + a quinone = a quinol + oxaloacetate. The protein operates within carbohydrate metabolism; tricarboxylic acid cycle; oxaloacetate from (S)-malate (quinone route): step 1/1. The chain is Probable malate:quinone oxidoreductase from Bacillus cereus (strain ATCC 14579 / DSM 31 / CCUG 7414 / JCM 2152 / NBRC 15305 / NCIMB 9373 / NCTC 2599 / NRRL B-3711).